Consider the following 371-residue polypeptide: tRNA/tmRNA (uracil-C(5))-methyltransferase (371 aa).

S-adenosyl-L-methionine-binding residues include Q194, Y223, N228, E244, and D304. The active-site Nucleophile is the C329. E363 acts as the Proton acceptor in catalysis.

The protein belongs to the class I-like SAM-binding methyltransferase superfamily. RNA M5U methyltransferase family. TrmA subfamily.

The enzyme catalyses uridine(54) in tRNA + S-adenosyl-L-methionine = 5-methyluridine(54) in tRNA + S-adenosyl-L-homocysteine + H(+). The catalysed reaction is uridine(341) in tmRNA + S-adenosyl-L-methionine = 5-methyluridine(341) in tmRNA + S-adenosyl-L-homocysteine + H(+). Functionally, dual-specificity methyltransferase that catalyzes the formation of 5-methyluridine at position 54 (m5U54) in all tRNAs, and that of position 341 (m5U341) in tmRNA (transfer-mRNA). This chain is tRNA/tmRNA (uracil-C(5))-methyltransferase, found in Sulfurovum sp. (strain NBC37-1).